The sequence spans 186 residues: Putative 5'(3')-deoxyribonucleotidase (186 aa).

The active-site Nucleophile is aspartate 6. Aspartate 6, aspartate 8, and aspartate 137 together coordinate Mg(2+). Aspartate 8 serves as the catalytic Proton donor.

It belongs to the 5'(3')-deoxyribonucleotidase family. Mg(2+) serves as cofactor.

Functionally, dephosphorylates the 5' and 2'(3')-phosphates of deoxyribonucleotides. This Bordetella bronchiseptica (strain ATCC BAA-588 / NCTC 13252 / RB50) (Alcaligenes bronchisepticus) protein is Putative 5'(3')-deoxyribonucleotidase.